Here is a 180-residue protein sequence, read N- to C-terminus: Large ribosomal subunit protein uL5 (180 aa).

The protein belongs to the universal ribosomal protein uL5 family. In terms of assembly, part of the 50S ribosomal subunit; part of the 5S rRNA/L5/L18/L25 subcomplex. Contacts the 5S rRNA and the P site tRNA. Forms a bridge to the 30S subunit in the 70S ribosome.

This is one of the proteins that bind and probably mediate the attachment of the 5S RNA into the large ribosomal subunit, where it forms part of the central protuberance. In the 70S ribosome it contacts protein S13 of the 30S subunit (bridge B1b), connecting the 2 subunits; this bridge is implicated in subunit movement. Contacts the P site tRNA; the 5S rRNA and some of its associated proteins might help stabilize positioning of ribosome-bound tRNAs. The protein is Large ribosomal subunit protein uL5 of Chloroflexus aggregans (strain MD-66 / DSM 9485).